A 227-amino-acid polypeptide reads, in one-letter code: Homeobox protein HD-10 (227 aa).

Positions 30–89 (FVKHRKRTTKAQLKVLEETFETNIRPDANMRKKLGEQLGMTPRSVQVWFQNRRAKIKKLT) form a DNA-binding region, homeobox. A disordered region spans residues 88–115 (LTQKKMMQQENTDNTKGPDAAHGSSSPK). Over residues 92-102 (KMMQQENTDNT) the composition is skewed to polar residues.

It localises to the nucleus. The protein is Homeobox protein HD-10 (HD-10) of Encephalitozoon cuniculi (strain GB-M1) (Microsporidian parasite).